The following is a 408-amino-acid chain: ATP phosphoribosyltransferase regulatory subunit (408 aa).

The protein belongs to the class-II aminoacyl-tRNA synthetase family. HisZ subfamily. Heteromultimer composed of HisG and HisZ subunits.

It localises to the cytoplasm. It functions in the pathway amino-acid biosynthesis; L-histidine biosynthesis; L-histidine from 5-phospho-alpha-D-ribose 1-diphosphate: step 1/9. In terms of biological role, required for the first step of histidine biosynthesis. May allow the feedback regulation of ATP phosphoribosyltransferase activity by histidine. The sequence is that of ATP phosphoribosyltransferase regulatory subunit from Gloeothece citriformis (strain PCC 7424) (Cyanothece sp. (strain PCC 7424)).